Here is a 274-residue protein sequence, read N- to C-terminus: MAIHLYKTSTPSTRNGAVDSQVKSNPRNNLIYGQHHCGKGRNARGIITVRHRGGGHKRLYRKIDFRRNTKDIYGRIVTIEYDPNRNAYICLIHYGDGEKRYILHPRGAIIGDTIVSGTEVPIKMGNALPLTDMPLGTAIHNIEITLGKGGQLARAAGAVAKLIAKEGKSATLKLPSGEVRLISKNCSATVGQVGNVGVNQKSLGRAGSKCWLGKRPVVRGVVMNPVDHPHGGGEGRAPIGRKKPVTPWGYPALGRRTRKRKKYSETLILRRRSK.

Disordered regions lie at residues 1 to 22 (MAIHLYKTSTPSTRNGAVDSQV) and 225 to 254 (PVDHPHGGGEGRAPIGRKKPVTPWGYPALG).

This sequence belongs to the universal ribosomal protein uL2 family. As to quaternary structure, part of the 50S ribosomal subunit.

It is found in the plastid. The protein localises to the chloroplast. This chain is Large ribosomal subunit protein uL2c (rpl2), found in Sinapis alba (White mustard).